The following is a 347-amino-acid chain: Protein RecA (347 aa).

67–74 lines the ATP pocket; that stretch reads GPESSGKT.

The protein belongs to the RecA family.

Its subcellular location is the cytoplasm. Functionally, can catalyze the hydrolysis of ATP in the presence of single-stranded DNA, the ATP-dependent uptake of single-stranded DNA by duplex DNA, and the ATP-dependent hybridization of homologous single-stranded DNAs. It interacts with LexA causing its activation and leading to its autocatalytic cleavage. This Helicobacter pylori (strain P12) protein is Protein RecA.